Reading from the N-terminus, the 100-residue chain is Putative exopolysaccharide production repressor protein y4xQ (100 aa).

Transmembrane regions (helical) follow at residues 9–29 (ILWL…GSIS) and 35–55 (TMVG…FLLW). A disordered region spans residues 66 to 100 (TTGQFHGEEQPGDPRIAGTHGRTDGDPCFEDEDSR).

To Rhizobium exopolysaccharide production repressor protein (ExoX).

Its subcellular location is the cell membrane. Its function is as follows. Could be involved in the inhibition of exopolysaccharide synthesis (EPS) and nodulation ability (nod). This chain is Putative exopolysaccharide production repressor protein y4xQ, found in Sinorhizobium fredii (strain NBRC 101917 / NGR234).